The following is a 430-amino-acid chain: Probable aspartic-type endopeptidase TRV_06366 (430 aa).

The signal sequence occupies residues 1–17 (MHVSTLLVAVLLPLALS). Positions 18-87 (KPTPRKKTSS…SKATAGSGKE (70 aa)) are cleaved as a propeptide — activation peptide. The interval 61–104 (HEMEGYHPQPISKLPGNSKATAGSGKEGVESQDEKGEVVNNPTD) is disordered. Basic and acidic residues predominate over residues 87–104 (EGVESQDEKGEVVNNPTD). One can recognise a Peptidase A1 domain in the interval 109 to 427 (FLSPVTIGGQ…DQRGPSISLA (319 aa)). D125 is an active-site residue. An N-linked (GlcNAc...) asparagine glycan is attached at N306. D314 is an active-site residue.

Belongs to the peptidase A1 family.

It localises to the secreted. Functionally, probable secreted aspartic-type endopeptidase which contributes to virulence. The sequence is that of Probable aspartic-type endopeptidase TRV_06366 from Trichophyton verrucosum (strain HKI 0517).